A 435-amino-acid chain; its full sequence is Serine/threonine-protein kinase 40 (435 aa).

In terms of domain architecture, Protein kinase spans 35–332; sequence FILGPRLGNS…DVLEALSAII (298 aa). Residues 41-49 and Lys-66 each bind ATP; that span reads LGNSPVPSI. Asp-197 acts as the Proton acceptor in catalysis.

The protein belongs to the protein kinase superfamily. CAMK Ser/Thr protein kinase family.

The protein localises to the nucleus. It is found in the cytoplasm. It carries out the reaction L-seryl-[protein] + ATP = O-phospho-L-seryl-[protein] + ADP + H(+). The enzyme catalyses L-threonyl-[protein] + ATP = O-phospho-L-threonyl-[protein] + ADP + H(+). In terms of biological role, may be a negative regulator of NF-kappa-B and p53-mediated gene transcription. The protein is Serine/threonine-protein kinase 40 (Stk40) of Rattus norvegicus (Rat).